We begin with the raw amino-acid sequence, 225 residues long: MTIKAILTDIEGTTSAVSFVFDVLFPYAARHLPDFVREHAGETEVAAQLAAVRAESGEADADVERVIAILLQWIAEDRKVTPLKALQGMVWAQGYRDGQLKGHVYPDAVQALREWKARGLDLYVYSSGSIQAQKLIFGCSEAGDLGSLFSGYFDTTSGPKRESASYARIAGAIGLPAAEILFLSDVVQELDAARDAGMRTLGLAREGGSLDGHPTVASFADILVE.

Belongs to the HAD-like hydrolase superfamily. MasA/MtnC family. As to quaternary structure, monomer. Mg(2+) serves as cofactor.

It carries out the reaction 5-methylsulfanyl-2,3-dioxopentyl phosphate + H2O = 1,2-dihydroxy-5-(methylsulfanyl)pent-1-en-3-one + phosphate. The protein operates within amino-acid biosynthesis; L-methionine biosynthesis via salvage pathway; L-methionine from S-methyl-5-thio-alpha-D-ribose 1-phosphate: step 3/6. It functions in the pathway amino-acid biosynthesis; L-methionine biosynthesis via salvage pathway; L-methionine from S-methyl-5-thio-alpha-D-ribose 1-phosphate: step 4/6. Its function is as follows. Bifunctional enzyme that catalyzes the enolization of 2,3-diketo-5-methylthiopentyl-1-phosphate (DK-MTP-1-P) into the intermediate 2-hydroxy-3-keto-5-methylthiopentenyl-1-phosphate (HK-MTPenyl-1-P), which is then dephosphorylated to form the acireductone 1,2-dihydroxy-3-keto-5-methylthiopentene (DHK-MTPene). This Pseudomonas aeruginosa (strain LESB58) protein is Enolase-phosphatase E1.